The chain runs to 475 residues: Putative aldehyde dehydrogenase (475 aa).

NAD(+) contacts are provided by residues 146-147 (WN) and 223-224 (GS). Glu245 (proton acceptor) is an active-site residue. An NAD(+)-binding site is contributed by Leu246. The Nucleophile role is filled by Cys279. Glu379 is an NAD(+) binding site.

The protein belongs to the aldehyde dehydrogenase family.

It carries out the reaction an aldehyde + NAD(+) + H2O = a carboxylate + NADH + 2 H(+). This is Putative aldehyde dehydrogenase from Staphylococcus aureus (strain bovine RF122 / ET3-1).